Here is a 374-residue protein sequence, read N- to C-terminus: Ribosomal RNA large subunit methyltransferase G (374 aa).

It belongs to the methyltransferase superfamily. RlmG family.

Its subcellular location is the cytoplasm. The enzyme catalyses guanosine(1835) in 23S rRNA + S-adenosyl-L-methionine = N(2)-methylguanosine(1835) in 23S rRNA + S-adenosyl-L-homocysteine + H(+). Specifically methylates the guanine in position 1835 (m2G1835) of 23S rRNA. The chain is Ribosomal RNA large subunit methyltransferase G from Ectopseudomonas mendocina (strain ymp) (Pseudomonas mendocina).